The following is a 273-amino-acid chain: uncharacterized protein (273 aa).

The next 2 membrane-spanning stretches (helical) occupy residues 24-44 and 103-123; these read VGVS…VTIL and IVGP…EAWA. The segment at 132–194 is disordered; sequence SDLPHHGRQS…QPPAQTQPYR (63 aa). Basic residues predominate over residues 164–179; that stretch reads SSHHIRSPAVARHHKT. Residues 183 to 192 show a composition bias toward low complexity; the sequence is TTQPPAQTQP.

It localises to the cell membrane. This is an uncharacterized protein from Sinorhizobium fredii (strain NBRC 101917 / NGR234).